We begin with the raw amino-acid sequence, 287 residues long: Proteasome assembly chaperone 1 (287 aa).

A disordered region spans residues 1 to 32; it reads MATFFGEVQSVFSRAVDEDDEEEEGEEEEEDR. Acidic residues predominate over residues 17 to 32; that stretch reads DEDDEEEEGEEEEEDR.

It belongs to the PSMG1 family. As to quaternary structure, forms a heterodimer with psmg2. Degraded by the proteasome upon completion of 20S proteasome maturation.

The protein resides in the cytoplasm. Its subcellular location is the endoplasmic reticulum. Its function is as follows. Chaperone protein which promotes assembly of the 20S proteasome as part of a heterodimer with psmg2. The chain is Proteasome assembly chaperone 1 from Xenopus tropicalis (Western clawed frog).